The chain runs to 128 residues: Probable 4-amino-4-deoxy-L-arabinose-phosphoundecaprenol flippase subunit ArnF (128 aa).

Residues 1 to 2 are Cytoplasmic-facing; that stretch reads MG. Residues 3–23 traverse the membrane as a helical segment; the sequence is LMWGLFSVIIASAAQLSLGFA. Topologically, residues 24-32 are periplasmic; sequence ASHLPPMTH. A helical membrane pass occupies residues 33-53; the sequence is LWDFIAALLAFGLDARILLLG. The Cytoplasmic segment spans residues 54–76; it reads LQGYLLSVFCWYKTLHKLALSKA. The chain crosses the membrane as a helical span at residues 77–97; it reads YALLSMSYVLVWIASMVLPGW. At 98-100 the chain is on the periplasmic side; sequence EGT. A helical transmembrane segment spans residues 101 to 121; sequence FSLKALLGVACIMSGLMLIFL. The Cytoplasmic segment spans residues 122–128; it reads PTTKQRY.

It belongs to the ArnF family. As to quaternary structure, heterodimer of ArnE and ArnF.

It is found in the cell inner membrane. It functions in the pathway bacterial outer membrane biogenesis; lipopolysaccharide biosynthesis. Functionally, translocates 4-amino-4-deoxy-L-arabinose-phosphoundecaprenol (alpha-L-Ara4N-phosphoundecaprenol) from the cytoplasmic to the periplasmic side of the inner membrane. The chain is Probable 4-amino-4-deoxy-L-arabinose-phosphoundecaprenol flippase subunit ArnF from Escherichia coli O7:K1 (strain IAI39 / ExPEC).